A 127-amino-acid chain; its full sequence is Small ribosomal subunit protein bS6 (127 aa).

The interval 102 to 127 (IMQGAEKGKSSRKEKVDAEAEASEEA) is disordered. Basic and acidic residues predominate over residues 107–119 (EKGKSSRKEKVDA).

The protein belongs to the bacterial ribosomal protein bS6 family.

Its function is as follows. Binds together with bS18 to 16S ribosomal RNA. This Coxiella burnetii (strain CbuK_Q154) (Coxiella burnetii (strain Q154)) protein is Small ribosomal subunit protein bS6.